A 155-amino-acid chain; its full sequence is UPF0461 protein C5orf24 homolog (155 aa).

Residues 60-69 (NETHLQTSTS) are compositionally biased toward polar residues. The segment at 60 to 155 (NETHLQTSTS…QQALMCSSDA (96 aa)) is disordered. The segment covering 78-92 (LKKKKNVGRSGKRGR) has biased composition (basic residues). Over residues 94-107 (SGTTKSAGYRTSTG) the composition is skewed to polar residues.

The protein belongs to the UPF0461 family.

This Xenopus laevis (African clawed frog) protein is UPF0461 protein C5orf24 homolog.